Here is a 275-residue protein sequence, read N- to C-terminus: 3-deoxy-manno-octulosonate cytidylyltransferase (275 aa).

Belongs to the KdsB family.

The protein resides in the cytoplasm. It catalyses the reaction 3-deoxy-alpha-D-manno-oct-2-ulosonate + CTP = CMP-3-deoxy-beta-D-manno-octulosonate + diphosphate. The protein operates within nucleotide-sugar biosynthesis; CMP-3-deoxy-D-manno-octulosonate biosynthesis; CMP-3-deoxy-D-manno-octulosonate from 3-deoxy-D-manno-octulosonate and CTP: step 1/1. It functions in the pathway bacterial outer membrane biogenesis; lipopolysaccharide biosynthesis. Activates KDO (a required 8-carbon sugar) for incorporation into bacterial lipopolysaccharide in Gram-negative bacteria. This chain is 3-deoxy-manno-octulosonate cytidylyltransferase, found in Psychrobacter sp. (strain PRwf-1).